Here is a 499-residue protein sequence, read N- to C-terminus: Alpha-amylase A type-3 (499 aa).

The first 21 residues, 1–21 (MMVAWWSLFLYGLQVAAPALA), serve as a signal peptide directing secretion. Cys-51 and Cys-59 are joined by a disulfide. Residue Trp-104 coordinates substrate. Asn-142 is a binding site for Ca(2+). A substrate-binding site is contributed by His-143. Cysteines 171 and 185 form a disulfide. Residues Glu-183 and Asp-196 each coordinate Ca(2+). Asn-218 carries an N-linked (GlcNAc...) asparagine glycan. Arg-225 contributes to the substrate binding site. Positions 227, 231, and 251 each coordinate Ca(2+). Asp-227 (nucleophile) is an active-site residue. 230–231 (KH) provides a ligand contact to substrate. Glu-251 functions as the Proton donor in the catalytic mechanism. Gly-255 provides a ligand contact to substrate. A disulfide bond links Cys-261 and Cys-304. Arg-365 contributes to the substrate binding site. A disulfide bridge connects residues Cys-461 and Cys-496.

This sequence belongs to the glycosyl hydrolase 13 family. As to quaternary structure, monomer. Requires Ca(2+) as cofactor.

Its subcellular location is the secreted. It carries out the reaction Endohydrolysis of (1-&gt;4)-alpha-D-glucosidic linkages in polysaccharides containing three or more (1-&gt;4)-alpha-linked D-glucose units.. The polypeptide is Alpha-amylase A type-3 (amy3) (Aspergillus oryzae (strain ATCC 42149 / RIB 40) (Yellow koji mold)).